A 1755-amino-acid polypeptide reads, in one-letter code: Transposon Ty1-DR1 Gag-Pol polyprotein (1755 aa).

3 stretches are compositionally biased toward polar residues: residues methionine 1 to proline 10, threonine 48 to serine 60, and glutamine 127 to phenylalanine 152. Disordered regions lie at residues methionine 1–glutamine 93, proline 126–proline 173, and glycine 352–threonine 421. A compositionally biased stretch (low complexity) spans threonine 153–threonine 165. An RNA-binding region spans residues asparagine 299–histidine 401. Low complexity predominate over residues asparagine 402–serine 418. Serine 416 bears the Phosphoserine mark. The active-site For protease activity; shared with dimeric partner is the aspartate 461. An integrase-type zinc finger-like region spans residues asparagine 583–cysteine 640. In terms of domain architecture, Integrase catalytic spans asparagine 660–proline 835. Residues aspartate 671 and aspartate 736 each coordinate Mg(2+). Disordered regions lie at residues serine 956–lysine 1087, arginine 1092–proline 1111, and aspartate 1130–threonine 1187. The segment covering serine 960–threonine 969 has biased composition (low complexity). The span at serine 1005–threonine 1015 shows a compositional bias: polar residues. Positions glutamate 1038 to serine 1053 are enriched in basic and acidic residues. Polar residues-rich tracts occupy residues tyrosine 1054–aspartate 1082 and proline 1101–proline 1111. The short motif at lysine 1178–arginine 1212 is the Bipartite nuclear localization signal element. The 139-residue stretch at asparagine 1338–glutamine 1476 folds into the Reverse transcriptase Ty1/copia-type domain. 6 residues coordinate Mg(2+): aspartate 1346, aspartate 1427, aspartate 1428, aspartate 1610, glutamate 1652, and aspartate 1685. In terms of domain architecture, RNase H Ty1/copia-type spans aspartate 1610 to lysine 1752.

As to quaternary structure, the capsid protein forms a homotrimer, from which the VLPs are assembled. The protease is a homodimer, whose active site consists of two apposed aspartic acid residues. Initially, virus-like particles (VLPs) are composed of the structural unprocessed proteins Gag and Gag-Pol, and also contain the host initiator methionine tRNA (tRNA(i)-Met) which serves as a primer for minus-strand DNA synthesis, and a dimer of genomic Ty RNA. Processing of the polyproteins occurs within the particle and proceeds by an ordered pathway, called maturation. First, the protease (PR) is released by autocatalytic cleavage of the Gag-Pol polyprotein yielding capsid protein p45 and a Pol-p154 precursor protein. This cleavage is a prerequisite for subsequent processing of Pol-p154 at the remaining sites to release the mature structural and catalytic proteins. Maturation takes place prior to the RT reaction and is required to produce transposition-competent VLPs.

Its subcellular location is the cytoplasm. It is found in the nucleus. The catalysed reaction is DNA(n) + a 2'-deoxyribonucleoside 5'-triphosphate = DNA(n+1) + diphosphate. The enzyme catalyses Endonucleolytic cleavage to 5'-phosphomonoester.. Functionally, capsid protein (CA) is the structural component of the virus-like particle (VLP), forming the shell that encapsulates the retrotransposons dimeric RNA genome. The particles are assembled from trimer-clustered units and there are holes in the capsid shells that allow for the diffusion of macromolecules. CA also has nucleocapsid-like chaperone activity, promoting primer tRNA(i)-Met annealing to the multipartite primer-binding site (PBS), dimerization of Ty1 RNA and initiation of reverse transcription. In terms of biological role, the aspartyl protease (PR) mediates the proteolytic cleavages of the Gag and Gag-Pol polyproteins after assembly of the VLP. Its function is as follows. Reverse transcriptase/ribonuclease H (RT) is a multifunctional enzyme that catalyzes the conversion of the retro-elements RNA genome into dsDNA within the VLP. The enzyme displays a DNA polymerase activity that can copy either DNA or RNA templates, and a ribonuclease H (RNase H) activity that cleaves the RNA strand of RNA-DNA heteroduplexes during plus-strand synthesis and hydrolyzes RNA primers. The conversion leads to a linear dsDNA copy of the retrotransposon that includes long terminal repeats (LTRs) at both ends. Integrase (IN) targets the VLP to the nucleus, where a subparticle preintegration complex (PIC) containing at least integrase and the newly synthesized dsDNA copy of the retrotransposon must transit the nuclear membrane. Once in the nucleus, integrase performs the integration of the dsDNA into the host genome. In Saccharomyces cerevisiae (strain ATCC 204508 / S288c) (Baker's yeast), this protein is Transposon Ty1-DR1 Gag-Pol polyprotein (TY1B-DR1).